The chain runs to 933 residues: Isoleucine--tRNA ligase (933 aa).

The 'HIGH' region signature appears at 57–67; it reads PYANGNIHVGH. Glu-554 lines the L-isoleucyl-5'-AMP pocket. The short motif at 595-599 is the 'KMSKS' region element; it reads KMSKS. Residue Lys-598 participates in ATP binding.

Belongs to the class-I aminoacyl-tRNA synthetase family. IleS type 1 subfamily. Monomer.

The protein localises to the cytoplasm. It catalyses the reaction tRNA(Ile) + L-isoleucine + ATP = L-isoleucyl-tRNA(Ile) + AMP + diphosphate. Its function is as follows. Catalyzes the attachment of isoleucine to tRNA(Ile). As IleRS can inadvertently accommodate and process structurally similar amino acids such as valine, to avoid such errors it has two additional distinct tRNA(Ile)-dependent editing activities. One activity is designated as 'pretransfer' editing and involves the hydrolysis of activated Val-AMP. The other activity is designated 'posttransfer' editing and involves deacylation of mischarged Val-tRNA(Ile). The chain is Isoleucine--tRNA ligase from Streptococcus pyogenes serotype M28 (strain MGAS6180).